The sequence spans 236 residues: CO-responsive transcriptional regulator RcoM (236 aa).

Residues 1–64 enclose the PAS domain; the sequence is MDDFAYNLRR…PLRPKVAVLL (64 aa). A heme-binding site is contributed by His52. Positions 131-236 constitute an HTH LytTR-type domain; that stretch reads VPLGLGETTE…VTRLRGLLAI (106 aa).

Heme serves as cofactor.

Activates the expression of the CowN protein in response to carbon monoxide (CO). Is required to sustain N(2)-dependent growth in the presence of low levels of carbon monoxide (CO). This chain is CO-responsive transcriptional regulator RcoM (rcoM), found in Rhodospirillum rubrum (strain ATCC 11170 / ATH 1.1.1 / DSM 467 / LMG 4362 / NCIMB 8255 / S1).